The primary structure comprises 751 residues: Kelch-like protein 1 (751 aa).

Composition is skewed to low complexity over residues 25–36 (PSPASSSPAGGS) and 74–90 (SSSS…ASSS). Disordered stretches follow at residues 25-54 (PSPA…GPSQ), 69-98 (FWKK…LNGT), and 157-184 (SSIQ…SDLD). Polar residues predominate over residues 170-184 (LTSTNHSLTPQSDLD). One can recognise a BTB domain in the interval 215–282 (CDVILIVGNR…AYTGCLELKE (68 aa)). Kelch repeat units lie at residues 463-509 (TLYA…VIDD), 510-556 (KLFV…VLEG), 558-603 (IYAV…ALNG), 604-650 (KLYS…TCDG), 652-703 (LYAV…LLGD), and 704-750 (RLYA…VIKQ).

In terms of tissue distribution, highly expressed in brain.

It is found in the cytoplasm. Its subcellular location is the cytoskeleton. May play a role in organizing the actin cytoskeleton of the brain cells. The chain is Kelch-like protein 1 (Klhl1) from Mus musculus (Mouse).